The chain runs to 303 residues: Tyrosine recombinase XerC (303 aa).

One can recognise a Core-binding (CB) domain in the interval 6 to 92; that stretch reads ASLAPQVEAF…ALRSFLNWLV (87 aa). A Tyr recombinase domain is found at 113–292; sequence HLPKNIDVDE…DFQHLATVYD (180 aa). Residues arginine 152, lysine 176, histidine 244, arginine 247, and histidine 270 contribute to the active site. Tyrosine 279 acts as the O-(3'-phospho-DNA)-tyrosine intermediate in catalysis.

Belongs to the 'phage' integrase family. XerC subfamily. As to quaternary structure, forms a cyclic heterotetrameric complex composed of two molecules of XerC and two molecules of XerD, in which XerC interacts with XerD via its C-terminal region, XerD interacts with XerC via its C-terminal region and so on.

It is found in the cytoplasm. FtsK may regulate the catalytic switch between XerC and XerD in the heterotetrameric complex during the two steps of the recombination process. Functionally, site-specific tyrosine recombinase, which acts by catalyzing the cutting and rejoining of the recombining DNA molecules. Binds cooperatively to specific DNA consensus sequences that are separated from XerD binding sites by a short central region, forming the heterotetrameric XerC-XerD complex that recombines DNA substrates. The complex is essential to convert dimers of the bacterial chromosome into monomers to permit their segregation at cell division. It also contributes to the segregational stability of plasmids. In the complex XerC specifically exchanges the top DNA strands. The sequence is that of Tyrosine recombinase XerC from Yersinia pestis.